Reading from the N-terminus, the 525-residue chain is Ribosomal protein S6 kinase beta-1 (525 aa).

A disordered region spans residues 1–54 (MRRRRRRDGFYPAPDFRDREAEDMAGVFDIDLDQPEDAGSEDELEEGGQLNESM). The TOS motif motif lies at 28–32 (FDIDL). A compositionally biased stretch (acidic residues) spans 30 to 46 (IDLDQPEDAGSEDELEE). The Protein kinase domain occupies 91–352 (FELLRVLGKG…AGEVQAHPFF (262 aa)). ATP-binding positions include 97 to 105 (LGKGGYGKV) and Lys-123. Residue Asp-218 is the Proton acceptor of the active site. Thr-252 is modified (phosphothreonine; by PDPK1). One can recognise an AGC-kinase C-terminal domain in the interval 353–423 (RHINWEELLA…VAPSVLESVK (71 aa)). Positions 380–399 (SQFDSKFTRQTPVDSPDDST) are disordered. Positions 381–399 (QFDSKFTRQTPVDSPDDST) are enriched in polar residues. Position 394 is a phosphoserine (Ser-394). At Thr-412 the chain carries Phosphothreonine; by MTOR, NEK6 and NEK7. Residues 424–525 (EKFSFEPKIR…KRPEHLRMNL (102 aa)) form an autoinhibitory domain region. A phosphoserine mark is found at Ser-434 and Ser-441. The residue at position 444 (Thr-444) is a Phosphothreonine. Phosphoserine occurs at positions 447 and 452. Lys-516 bears the N6-acetyllysine mark.

It belongs to the protein kinase superfamily. AGC Ser/Thr protein kinase family. S6 kinase subfamily. In terms of assembly, interacts with PPP1R9A/neurabin-1. Interacts with RPTOR. Interacts with IRS1. Interacts with EIF3B and EIF3C. Interacts with TRAF4. Interacts with POLDIP3. Interacts (via N-terminus) with IER5. (Microbial infection) Interacts with Mumps virus phosphoprotein; this interaction may play a role in the viral replication and transcription. Phosphorylation at Thr-412 is regulated by mTORC1. The phosphorylation at this site is maintained by an agonist-dependent autophosphorylation mechanism. Activated by phosphorylation at Thr-252 by PDPK1. Dephosphorylation by PPP1CC at Thr-412 in mitochondrion. Widely expressed.

It is found in the synapse. Its subcellular location is the synaptosome. It localises to the mitochondrion outer membrane. The protein localises to the mitochondrion. The protein resides in the nucleus. It is found in the cytoplasm. It carries out the reaction L-seryl-[protein] + ATP = O-phospho-L-seryl-[protein] + ADP + H(+). The catalysed reaction is L-threonyl-[protein] + ATP = O-phospho-L-threonyl-[protein] + ADP + H(+). Its activity is regulated as follows. Activation requires multiple phosphorylation events on serine/threonine residues. Activation appears to be first mediated by phosphorylation of multiple sites in the autoinhibitory domain, which facilitates phosphorylation at Thr-412, disrupting the autoinhibitory mechanism and allowing phosphorylation of Thr-252 by PDPK1. The active conformation of the kinase is believed to be stabilized by a mechanism involving three conserved phosphorylation sites located in the kinase domain activation loop (Thr-252) and in the AGC-kinase C-terminal domain (Ser-394 in the middle of the tail/linker region and Thr-412 within a hydrophobic motif at its end). Activated by mTORC1; isoform Alpha I and isoform Alpha II are sensitive to rapamycin, which inhibits activating phosphorylation at Thr-412. Activated by PDPK1. In terms of biological role, serine/threonine-protein kinase that acts downstream of mTOR signaling in response to growth factors and nutrients to promote cell proliferation, cell growth and cell cycle progression. Regulates protein synthesis through phosphorylation of EIF4B, RPS6 and EEF2K, and contributes to cell survival by repressing the pro-apoptotic function of BAD. Under conditions of nutrient depletion, the inactive form associates with the EIF3 translation initiation complex. Upon mitogenic stimulation, phosphorylation by the mechanistic target of rapamycin complex 1 (mTORC1) leads to dissociation from the EIF3 complex and activation. The active form then phosphorylates and activates several substrates in the pre-initiation complex, including the EIF2B complex and the cap-binding complex component EIF4B. Also controls translation initiation by phosphorylating a negative regulator of EIF4A, PDCD4, targeting it for ubiquitination and subsequent proteolysis. Promotes initiation of the pioneer round of protein synthesis by phosphorylating POLDIP3/SKAR. In response to IGF1, activates translation elongation by phosphorylating EEF2 kinase (EEF2K), which leads to its inhibition and thus activation of EEF2. Also plays a role in feedback regulation of mTORC2 by mTORC1 by phosphorylating MAPKAP1/SIN1, MTOR and RICTOR, resulting in the inhibition of mTORC2 and AKT1 signaling. Also involved in feedback regulation of mTORC1 and mTORC2 by phosphorylating DEPTOR. Mediates cell survival by phosphorylating the pro-apoptotic protein BAD and suppressing its pro-apoptotic function. Phosphorylates mitochondrial URI1 leading to dissociation of a URI1-PPP1CC complex. The free mitochondrial PPP1CC can then dephosphorylate RPS6KB1 at Thr-412, which is proposed to be a negative feedback mechanism for the RPS6KB1 anti-apoptotic function. Mediates TNF-alpha-induced insulin resistance by phosphorylating IRS1 at multiple serine residues, resulting in accelerated degradation of IRS1. In cells lacking functional TSC1-2 complex, constitutively phosphorylates and inhibits GSK3B. May be involved in cytoskeletal rearrangement through binding to neurabin. Phosphorylates and activates the pyrimidine biosynthesis enzyme CAD, downstream of MTOR. Following activation by mTORC1, phosphorylates EPRS and thereby plays a key role in fatty acid uptake by adipocytes and also most probably in interferon-gamma-induced translation inhibition. The chain is Ribosomal protein S6 kinase beta-1 (RPS6KB1) from Homo sapiens (Human).